A 336-amino-acid chain; its full sequence is Filaggrin (336 aa).

The tract at residues 1–313 (PDGSGRSSNR…GVQGAAASGQ (313 aa)) is disordered. Composition is skewed to low complexity over residues 16–26 (QLSPSQSSDSQ), 40–66 (SSSA…LAAD), and 73–98 (ARQG…SSSA). Composition is skewed to basic and acidic residues over residues 100–120 (RQGR…HSDF), 163–176 (DSQH…EQQR), and 184–195 (HQHEHEQPESGH). Low complexity predominate over residues 285–311 (AQRGQSSSANRRAGSSSGSGVQGAAAS).

The protein belongs to the S100-fused protein family. In terms of processing, filaggrin is initially synthesized as a large, insoluble, highly phosphorylated precursor containing many tandem copies of 248 AA, which are not separated by large linker sequences. During terminal differentiation it is dephosphorylated and proteolytically cleaved. In terms of tissue distribution, expressed in the granular layer of the epidermis (at protein level). Expressed in the epidermis of the ear (at protein level).

It is found in the cytoplasmic granule. Aggregates keratin intermediate filaments and promotes disulfide-bond formation among the intermediate filaments during terminal differentiation of mammalian epidermis. The protein is Filaggrin (Flg) of Mus musculus (Mouse).